Reading from the N-terminus, the 389-residue chain is Transaldolase (389 aa).

Lys-136 acts as the Schiff-base intermediate with substrate in catalysis. EF-hand domains lie at 330–365 and 365–388; these read ALNQ…FDAI and IDLN…VSKL. Asp-343, Asp-345, Asp-347, Glu-354, Asp-366, Asn-368, Asp-370, Lys-372, and Glu-377 together coordinate Ca(2+).

The protein belongs to the transaldolase family. Type 1 subfamily.

The protein localises to the cytoplasm. It catalyses the reaction D-sedoheptulose 7-phosphate + D-glyceraldehyde 3-phosphate = D-erythrose 4-phosphate + beta-D-fructose 6-phosphate. It participates in carbohydrate degradation; pentose phosphate pathway; D-glyceraldehyde 3-phosphate and beta-D-fructose 6-phosphate from D-ribose 5-phosphate and D-xylulose 5-phosphate (non-oxidative stage): step 2/3. Transaldolase is important for the balance of metabolites in the pentose-phosphate pathway. This chain is Transaldolase, found in Gloeobacter violaceus (strain ATCC 29082 / PCC 7421).